A 371-amino-acid chain; its full sequence is Diguanylate cyclase A (371 aa).

A GGDEF domain is found at 233–366; it reads ETLSILMIDI…GRNRVTLSKN (134 aa). Residues aspartate 241, isoleucine 242, and glutamate 284 each contribute to the Mg(2+) site. The active-site Proton acceptor is the glutamate 284.

In terms of assembly, exists as a homodimer and as larger aggregates. Both dimers and aggregates possess DGC activity. It depends on Mg(2+) as a cofactor. Mn(2+) is required as a cofactor.

The protein resides in the cytoplasm. It catalyses the reaction 2 GTP = 3',3'-c-di-GMP + 2 diphosphate. Its activity is regulated as follows. Allosterically regulated by a feedback inhibition loop. In terms of biological role, catalyzes the conversion of GTP to cyclic-di-GMP (c-di-GMP). Shows activity under aerobic and anaerobic reaction conditions. The polypeptide is Diguanylate cyclase A (Treponema denticola (strain ATCC 35405 / DSM 14222 / CIP 103919 / JCM 8153 / KCTC 15104)).